A 224-amino-acid chain; its full sequence is UPF0758 protein Noc_0236 (224 aa).

The MPN domain occupies 102–224 (VLTDPQTTQR…TLSFAERGLL (123 aa)). His-173, His-175, and Asp-186 together coordinate Zn(2+). Residues 173-186 (HNHPSGVAEPSRAD) carry the JAMM motif motif.

The protein belongs to the UPF0758 family.

In Nitrosococcus oceani (strain ATCC 19707 / BCRC 17464 / JCM 30415 / NCIMB 11848 / C-107), this protein is UPF0758 protein Noc_0236.